The chain runs to 198 residues: A-type ATP synthase subunit E (198 aa).

Belongs to the V-ATPase E subunit family. In terms of assembly, has multiple subunits with at least A(3), B(3), C, D, E, F, H, I and proteolipid K(x).

The protein resides in the cell membrane. Functionally, component of the A-type ATP synthase that produces ATP from ADP in the presence of a proton gradient across the membrane. This Pyrococcus horikoshii (strain ATCC 700860 / DSM 12428 / JCM 9974 / NBRC 100139 / OT-3) protein is A-type ATP synthase subunit E.